We begin with the raw amino-acid sequence, 308 residues long: ADP,ATP carrier protein (308 aa).

Solcar repeat units lie at residues 6–99 (KNFM…FKRM), 110–203 (KWFA…LKPV), and 211–297 (NNFL…LQVI). The next 5 helical transmembrane spans lie at 8–35 (FMVD…VKLL), 76–100 (TANV…KRMF), 108–128 (YWKW…VSLS), 179–200 (FNIS…YDSL), and 214–234 (LAAF…SYPI). Positions 81 and 93 each coordinate ADP. Arginine 238 provides a ligand contact to ADP. The interval 238-243 (RRRMMM) is important for transport activity. The Nucleotide carrier signature motif motif lies at 238-243 (RRRMMM). The helical transmembrane segment at 274–294 (AGANILRAVAGAGVLAGYDQL) threads the bilayer.

This sequence belongs to the mitochondrial carrier (TC 2.A.29) family. Monomer.

The protein localises to the mitochondrion inner membrane. The catalysed reaction is ADP(in) + ATP(out) = ADP(out) + ATP(in). With respect to regulation, the matrix-open state (m-state) is inhibited by the membrane-permeable bongkrekic acid (BKA). The cytoplasmic-open state (c-state) is inhibited by the membrane-impermeable toxic inhibitor carboxyatractyloside (CATR). In terms of biological role, ADP:ATP antiporter that mediates import of ADP into the mitochondrial matrix for ATP synthesis, and export of ATP out to fuel the cell. Cycles between the cytoplasmic-open state (c-state) and the matrix-open state (m-state): operates by the alternating access mechanism with a single substrate-binding site intermittently exposed to either the cytosolic (c-state) or matrix (m-state) side of the inner mitochondrial membrane. The sequence is that of ADP,ATP carrier protein (ABT) from Chlamydomonas reinhardtii (Chlamydomonas smithii).